Reading from the N-terminus, the 352-residue chain is Potassium/proton antiporter CemA (352 aa).

3 consecutive transmembrane segments (helical) span residues 52-72, 227-247, and 312-332; these read VLVS…IHFF, IAAL…IILF, and IILL…KYWI.

The protein belongs to the CemA family.

Its subcellular location is the plastid. The protein localises to the chloroplast inner membrane. It catalyses the reaction K(+)(in) + H(+)(out) = K(+)(out) + H(+)(in). Contributes to K(+)/H(+) antiport activity by supporting proton efflux to control proton extrusion and homeostasis in chloroplasts in a light-dependent manner to modulate photosynthesis. Prevents excessive induction of non-photochemical quenching (NPQ) under continuous-light conditions. Indirectly promotes efficient inorganic carbon uptake into chloroplasts. In Oltmannsiellopsis viridis (Marine flagellate), this protein is Potassium/proton antiporter CemA.